Here is a 164-residue protein sequence, read N- to C-terminus: DNA-directed RNA polymerase 19 kDa subunit (164 aa).

Residues 1 to 35 (MADTDDIIDYESDDLTEYEDDEEEEEDGESLETSD) show a composition bias toward acidic residues. Positions 1 to 39 (MADTDDIIDYESDDLTEYEDDEEEEEDGESLETSDIDPK) are disordered.

This sequence belongs to the poxviridae DNA-directed RNA polymerase 19 kDa subunit family. In terms of assembly, the DNA-dependent RNA polymerase used for intermediate and late genes expression consists of eight subunits Rpo30/OPG66, Rpo7/OPG90, Rpo22/OPG103, Rpo147/OPG105, Rpo18/OPG119, Rpo19/OPG131, Rpo132/OPG151 and Rpo35/OPG156. The same holoenzyme, with the addition of the transcription-specificity factor OPG109, is used for early gene expression.

The protein resides in the virion. The catalysed reaction is RNA(n) + a ribonucleoside 5'-triphosphate = RNA(n+1) + diphosphate. Part of the DNA-dependent RNA polymerase which catalyzes the transcription of viral DNA into RNA using the four ribonucleoside triphosphates as substrates. Responsible for the transcription of early, intermediate and late genes. DNA-dependent RNA polymerase associates with the early transcription factor (ETF), itself composed of OPG118 and OPG133, thereby allowing the early genes transcription. Late transcription, and probably also intermediate transcription, require newly synthesized RNA polymerase. The sequence is that of DNA-directed RNA polymerase 19 kDa subunit (OPG131) from Homo sapiens (Human).